A 279-amino-acid chain; its full sequence is Pantothenate synthetase (279 aa).

26–33 (MGNLHEGH) is a binding site for ATP. The active-site Proton donor is the histidine 33. Glutamine 57 is a binding site for (R)-pantoate. Glutamine 57 serves as a coordination point for beta-alanine. Residue 144–147 (GKKD) coordinates ATP. Glutamine 150 is a binding site for (R)-pantoate. ATP contacts are provided by residues valine 173 and 181–184 (LSSR).

The protein belongs to the pantothenate synthetase family. As to quaternary structure, homodimer.

Its subcellular location is the cytoplasm. The catalysed reaction is (R)-pantoate + beta-alanine + ATP = (R)-pantothenate + AMP + diphosphate + H(+). It functions in the pathway cofactor biosynthesis; (R)-pantothenate biosynthesis; (R)-pantothenate from (R)-pantoate and beta-alanine: step 1/1. In terms of biological role, catalyzes the condensation of pantoate with beta-alanine in an ATP-dependent reaction via a pantoyl-adenylate intermediate. This Burkholderia cenocepacia (strain HI2424) protein is Pantothenate synthetase.